Consider the following 179-residue polypeptide: MQDQDKYAEQAASIEDPVTAEAASATTPTLEEQLAASQLLVQELQDSFLRAKAEVENFRRRAQEDVTRAHKFAIEGFAEMLLPVKDSLEMALQVETPSVESLKEGVEMTLKQLNAAFEKNRLLEIKPQQGDKLDPMKHQAMSLVPADQEPNTVVNTLQKGYLIADRLLRPALVTVAQEK.

The interval 1–29 is disordered; the sequence is MQDQDKYAEQAASIEDPVTAEAASATTPT.

It belongs to the GrpE family. In terms of assembly, homodimer.

Its subcellular location is the cytoplasm. Functionally, participates actively in the response to hyperosmotic and heat shock by preventing the aggregation of stress-denatured proteins, in association with DnaK and GrpE. It is the nucleotide exchange factor for DnaK and may function as a thermosensor. Unfolded proteins bind initially to DnaJ; upon interaction with the DnaJ-bound protein, DnaK hydrolyzes its bound ATP, resulting in the formation of a stable complex. GrpE releases ADP from DnaK; ATP binding to DnaK triggers the release of the substrate protein, thus completing the reaction cycle. Several rounds of ATP-dependent interactions between DnaJ, DnaK and GrpE are required for fully efficient folding. In Janthinobacterium sp. (strain Marseille) (Minibacterium massiliensis), this protein is Protein GrpE.